Here is a 275-residue protein sequence, read N- to C-terminus: Membrane protein insertase YidC (275 aa).

The signal sequence occupies residues 1–22 (MKKYKRLLLMAGLVTLVFVLSA). The N-palmitoyl cysteine moiety is linked to residue C23. A lipid anchor (S-diacylglycerol cysteine) is attached at C23. Transmembrane regions (helical) follow at residues 53–73 (LGGS…IILL), 127–147 (YIGC…YQAI), 169–189 (YLIL…LSSM), and 206–226 (PAMI…YWVV). Over residues 249-266 (EEAARQAKARERALERAK) the composition is skewed to basic and acidic residues. A disordered region spans residues 249–275 (EEAARQAKARERALERAKSPKKKGKKK).

The protein belongs to the OXA1/ALB3/YidC family. Type 2 subfamily.

The protein resides in the cell membrane. Its function is as follows. Required for the insertion and/or proper folding and/or complex formation of integral membrane proteins into the membrane. Involved in integration of membrane proteins that insert both dependently and independently of the Sec translocase complex, as well as at least some lipoproteins. The chain is Membrane protein insertase YidC from Enterococcus faecalis (strain ATCC 700802 / V583).